A 486-amino-acid chain; its full sequence is Pentatricopeptide repeat-containing protein At3g06430, chloroplastic (486 aa).

The transit peptide at 1 to 36 (MASMSLSFSSSLCSSRIPEGKRRFRHRDVGIVRCVL) directs the protein to the chloroplast. PPR repeat units lie at residues 123-157 (KEGT…GLEP), 158-188 (TVEL…MKSF), 194-228 (DVFT…LITP), 229-264 (NTVT…ACKP), 265-299 (DVWT…GIEP), 300-334 (ETRT…EFPW), 335-369 (TTST…GMKA), 370-404 (DTKT…EIPE), 405-439 (NTAF…QCVC), and 440-470 (DSRT…RQKL).

The protein belongs to the PPR family. P subfamily.

It localises to the plastid. It is found in the chloroplast. The polypeptide is Pentatricopeptide repeat-containing protein At3g06430, chloroplastic (EMB2750) (Arabidopsis thaliana (Mouse-ear cress)).